A 259-amino-acid polypeptide reads, in one-letter code: Aspartate/glutamate leucyltransferase (259 aa).

Belongs to the R-transferase family. Bpt subfamily.

The protein localises to the cytoplasm. The enzyme catalyses N-terminal L-glutamyl-[protein] + L-leucyl-tRNA(Leu) = N-terminal L-leucyl-L-glutamyl-[protein] + tRNA(Leu) + H(+). It carries out the reaction N-terminal L-aspartyl-[protein] + L-leucyl-tRNA(Leu) = N-terminal L-leucyl-L-aspartyl-[protein] + tRNA(Leu) + H(+). Its function is as follows. Functions in the N-end rule pathway of protein degradation where it conjugates Leu from its aminoacyl-tRNA to the N-termini of proteins containing an N-terminal aspartate or glutamate. This Rhizobium meliloti (strain 1021) (Ensifer meliloti) protein is Aspartate/glutamate leucyltransferase.